The sequence spans 727 residues: Glycerol-3-phosphate dehydrogenase, mitochondrial (727 aa).

A mitochondrion-targeting transit peptide spans 1–42 (MAFQKAVKGTILVGGGALATVLGLSPFAHYRRKQVSLAYVEA). 71–99 (DILVIGGGATGCGCALDAVTRGLKTALVE) is a binding site for FAD. Y601 bears the Phosphotyrosine mark. 2 consecutive EF-hand domains span residues 623 to 658 (SDIDRYKKRFHKFDEDEKGFITIVDVQRVLESINVQ) and 659 to 694 (MDENTLHEILCEVDLNKNGQVELHEFLQLMSAVQKG). D672, N674, N676, Q678, and E683 together coordinate Ca(2+).

It belongs to the FAD-dependent glycerol-3-phosphate dehydrogenase family. FAD is required as a cofactor.

The protein localises to the mitochondrion inner membrane. It catalyses the reaction a quinone + sn-glycerol 3-phosphate = dihydroxyacetone phosphate + a quinol. It functions in the pathway polyol metabolism; glycerol degradation via glycerol kinase pathway; glycerone phosphate from sn-glycerol 3-phosphate (anaerobic route): step 1/1. Its activity is regulated as follows. Calcium-binding enhance the activity of the enzyme. Calcium-responsive mitochondrial glycerol-3-phosphate dehydrogenase which seems to be a key component of the pancreatic beta-cell glucose-sensing device. The sequence is that of Glycerol-3-phosphate dehydrogenase, mitochondrial from Mus musculus (Mouse).